An 859-amino-acid polypeptide reads, in one-letter code: Leucine--tRNA ligase (859 aa).

The short motif at 42-52 (PYPSGRLHMGH) is the 'HIGH' region element. A 'KMSKS' region motif is present at residues 618–622 (KMSKS). K621 provides a ligand contact to ATP.

The protein belongs to the class-I aminoacyl-tRNA synthetase family.

It localises to the cytoplasm. The enzyme catalyses tRNA(Leu) + L-leucine + ATP = L-leucyl-tRNA(Leu) + AMP + diphosphate. The polypeptide is Leucine--tRNA ligase (Shewanella sp. (strain MR-7)).